The primary structure comprises 299 residues: Oxygen-dependent coproporphyrinogen-III oxidase (299 aa).

S92 contacts substrate. 2 residues coordinate a divalent metal cation: H96 and H106. Catalysis depends on H106, which acts as the Proton donor. 108-110 (NVR) is a binding site for substrate. Positions 145 and 175 each coordinate a divalent metal cation. Residues 240 to 275 (YVEFNLVWDRGTLFGLQTGGRTESILMSMPPLVRWE) are important for dimerization. 258–260 (GGR) contacts substrate.

The protein belongs to the aerobic coproporphyrinogen-III oxidase family. In terms of assembly, homodimer. A divalent metal cation serves as cofactor.

It is found in the cytoplasm. It catalyses the reaction coproporphyrinogen III + O2 + 2 H(+) = protoporphyrinogen IX + 2 CO2 + 2 H2O. It functions in the pathway porphyrin-containing compound metabolism; protoporphyrin-IX biosynthesis; protoporphyrinogen-IX from coproporphyrinogen-III (O2 route): step 1/1. Functionally, involved in the heme biosynthesis. Catalyzes the aerobic oxidative decarboxylation of propionate groups of rings A and B of coproporphyrinogen-III to yield the vinyl groups in protoporphyrinogen-IX. The chain is Oxygen-dependent coproporphyrinogen-III oxidase from Enterobacter sp. (strain 638).